A 319-amino-acid chain; its full sequence is Guanidinobutyrase (319 aa).

Mn(2+) contacts are provided by His-129, Asp-152, His-154, Asp-156, Asp-243, and Asp-245.

The protein belongs to the arginase family. Agmatinase subfamily. In terms of assembly, homohexamer. Mn(2+) serves as cofactor.

The catalysed reaction is 4-guanidinobutanoate + H2O = urea + 4-aminobutanoate. Its function is as follows. Catalyzes specifically the hydrolysis of 4-guanidinobutanoate to 4-aminobutanoate and urea. Has no activity against arginine, agmatine, 3-guanidinopropionate and guanidinoacetate. This Pseudomonas aeruginosa (strain ATCC 15692 / DSM 22644 / CIP 104116 / JCM 14847 / LMG 12228 / 1C / PRS 101 / PAO1) protein is Guanidinobutyrase (gbuA).